A 227-amino-acid chain; its full sequence is Neuromodulin (227 aa).

The interval Met1–Ala227 is disordered. Residues Cys3 and Cys4 are each lipidated (S-palmitoyl cysteine). Residues Lys9–His32 show a composition bias toward basic and acidic residues. Residues Ala31–Pro60 enclose the IQ domain. Ser41 carries the post-translational modification Phosphoserine; by PHK. Residues Glu54 to Asp84 are compositionally biased toward basic and acidic residues. Positions Gly85–Pro97 are enriched in low complexity. Residues Ser86 and Ser96 each carry the phosphoserine modification. Over residues Lys98–Gly127 the composition is skewed to basic and acidic residues. The segment covering Ser128–Thr139 has biased composition (low complexity). Thr138 carries the post-translational modification Phosphothreonine. Ser142, Ser144, and Ser145 each carry phosphoserine. Positions Lys146–Gln158 are enriched in basic and acidic residues. Positions Ala159 to Ser193 are enriched in low complexity. Position 172 is a phosphothreonine (Thr172). Residues Ser192 and Ser193 each carry the phosphoserine; by CK2 modification. Positions Val202–Glu215 are enriched in basic and acidic residues. The segment covering Gly216–Ala227 has biased composition (acidic residues).

Belongs to the neuromodulin family. As to quaternary structure, identified in a complex containing FGFR4, NCAM1, CDH2, PLCG1, FRS2, SRC, SHC1, GAP43 and CTTN. Interacts (via IQ domain) with calmodulin. Binds calmodulin with a greater affinity in the absence of Ca(2+) than in its presence. In terms of processing, phosphorylated. Phosphorylation of this protein by a protein kinase C is specifically correlated with certain forms of synaptic plasticity. Palmitoylated by ZDHHC3. Palmitoylation is regulated by ARF6 and is essential for plasma membrane association and axonal and dendritic filopodia induction. Deacylated by LYPLA2. In terms of tissue distribution, expressed in the hippocampus (at protein level). Expressed in the dorsal root ganglion and the spinal cord (at protein level).

It localises to the cell membrane. Its subcellular location is the cell projection. The protein localises to the growth cone membrane. It is found in the synapse. The protein resides in the filopodium membrane. It localises to the perikaryon. Its subcellular location is the dendrite. The protein localises to the axon. It is found in the cytoplasm. Functionally, this protein is associated with nerve growth. It is a major component of the motile 'growth cones' that form the tips of elongating axons. Plays a role in axonal and dendritic filopodia induction. The polypeptide is Neuromodulin (Gap43) (Mus musculus (Mouse)).